The chain runs to 150 residues: Ribonuclease K6 (150 aa).

The N-terminal stretch at 1-23 (MVLCFPLLLLLLVLWGPVCPLHA) is a signal peptide. His38 acts as the Proton acceptor in catalysis. Intrachain disulfides connect Cys46–Cys104, Cys60–Cys114, Cys78–Cys129, and Cys85–Cys92. An N-linked (GlcNAc...) asparagine glycan is attached at Asn55. Residues 61–65 (KHQNT) and Lys86 contribute to the substrate site. Asn100 carries N-linked (GlcNAc...) asparagine glycosylation. Arg105 contacts substrate. His145 (proton donor) is an active-site residue.

The protein belongs to the pancreatic ribonuclease family. In terms of assembly, interacts (via N-terminus) with bacterial lipopolysaccharide (LPS).

Its subcellular location is the secreted. The protein resides in the lysosome. It is found in the cytoplasmic granule. Functionally, ribonuclease which shows a preference for the pyrimidines uridine and cytosine. Has potent antibacterial activity against a range of Gram-positive and Gram-negative bacteria, including P.aeruginosa, A.baumanii, M.luteus, S.aureus, E.faecalis, E.faecium, S.saprophyticus and E.coli. Causes loss of bacterial membrane integrity, and also promotes agglutination of Gram-negative bacteria. Probably contributes to urinary tract sterility. Bactericidal activity is independent of RNase activity. The polypeptide is Ribonuclease K6 (RNASE6) (Pongo pygmaeus (Bornean orangutan)).